Consider the following 455-residue polypeptide: Angiopoietin-related protein 3 (455 aa).

The signal sequence occupies residues 1–16 (MHTIKLFLFVVPLVIA). The tract at residues 17-165 (SRVDPDLSSF…QEHPEVTSLK (149 aa)) is sufficient to inhibit LPL lipase activity. Positions 17-207 (SRVDPDLSSF…EIEKQLRKTG (191 aa)) are sufficient to inhibit LIPG/EL phospholipase activity. The tract at residues 32–56 (EPKSRFAMLDDVKILANGLLQLGHG) is required for inhibition of LPL lipase activity. Positions 85–206 (LSLRTNEIKE…KEIEKQLRKT (122 aa)) form a coiled coil. N115 carries an N-linked (GlcNAc...) asparagine glycan. Positions 202-242 (QLRKTGIQEPSENSLSSKSRAPRTTPPLQLNETENTEQDDL) are disordered. Residues 209–220 (QEPSENSLSSKS) are compositionally biased toward polar residues. Residue T226 is glycosylated (O-linked (GlcNAc) threonine). N232 carries N-linked (GlcNAc...) asparagine glycosylation. The 219-residue stretch at 237-455 (TEQDDLPADC…SSKMMLQPTT (219 aa)) folds into the Fibrinogen C-terminal domain. C246 and C274 are joined by a disulfide. Residues N296 and N357 are each glycosylated (N-linked (GlcNAc...) asparagine). C394 and C408 are joined by a disulfide.

Interacts with ANGPTL8. Interacts with ITGB3. In terms of processing, in part proteolytically cleaved by proprotein convertases; proposed to be involved in activation. In primary hepatocytes is intracellularily predominantly processed by FURIN and extracellularily by FURIN and PCSK6/PACE4. In 18.5 dpc embryos 75% of protein is found to be processed compared to 25 % in adults. In terms of tissue distribution, predominantly expressed in liver, weakly expressed in kidney and lung. Expressed in podocytes (at protein level). Expressed in hypothalamic neurons (at protein level). Expressed in bone marrow sinusoidal endothelial cells (at protein level).

The protein localises to the secreted. It is found in the cell projection. It localises to the lamellipodium. In terms of biological role, acts in part as a hepatokine that is involved in regulation of lipid and glucose metabolism. Proposed to play a role in the trafficking of energy substrates to either storage or oxidative tissues in response to food intake. Has a stimulatory effect on plasma triglycerides (TG), which is achieved by suppressing plasma TG clearance via inhibition of LPL activity; the function seems to be specific for the feeding conditions. The inhibition of LPL activity appears to be an indirect mechanism involving recruitment of proprotein convertases PCSK6 and FURIN to LPL leading to cleavage and dissociation of LPL from the cell surface; the function does not require ANGPTL3 proteolytic cleavage but seems to be mediated by the N-terminal domain, and is not inhibited by GPIHBP1. Can inhibit endothelial lipase, causing increased plasma levels of high density lipoprotein (HDL) cholesterol and phospholipids; the cleaved N-terminal domain is more efficient than the uncleaved proprotein. Can bind to adipocytes to activate lipolysis, releasing free fatty acids and glycerol. Suppresses LPL specifically in oxidative tissues which is required to route very low density lipoprotein (VLDL)-TG to white adipose tissue (WAT) for storage in response to food; the function may involve cooperation with circulating, liver-derived ANGPTL8 and ANGPTL4 expression in WAT. Contributes to lower plasma levels of low density lipoprotein (LDL)-cholesterol by a mechanism that is independent of the canonical pathway implicating APOE and LDLR. May stimulate hypothalamic LPL activity. Involved in angiogenesis. Binds to endothelial cells via integrin alpha-V/beta-3 (ITGAV:ITGB3), activates FAK, MAPK and Akt signaling pathways and induces cell adhesion and cell migration. May increase the motility of podocytes. Secreted from podocytes, may modulate properties of glomerular endothelial cells involving integrin alpha-V/beta-3 and Akt signaling. May induce actin filament rearrangements in podocytes implicating integrin alpha-V/beta-3 and Rac1 activation. Binds to hematopoietic stem cells (HSC) and is involved in the regulation of HSC activity probably implicating down-regulation of IKZF1/IKAROS. In Mus musculus (Mouse), this protein is Angiopoietin-related protein 3 (Angptl3).